Consider the following 120-residue polypeptide: Immunoglobulin kappa variable 2-24 (120 aa).

The first 19 residues, 1-19 (MRLLAQLLGLLMLWVPGSS), serve as a signal peptide directing secretion. Residues 20-120 (GDIVMTQTPL…YYCMQATQFP (101 aa)) form the Ig-like domain. Residues 21–43 (DIVMTQTPLSSPVTLGQPASISC) form a framework-1 region. A disulfide bridge connects residues C43 and C113. Residues 44–59 (RSSQSLVHSDGNTYLS) form a complementarity-determining-1 region. Residues 60–74 (WLQQRPGQPPRLLIY) form a framework-2 region. The tract at residues 75–81 (KISNRFS) is complementarity-determining-2. A framework-3 region spans residues 82–113 (GVPDRFSGSGAGTDFTLKISRVEAEDVGVYYC). Positions 114 to 120 (MQATQFP) are complementarity-determining-3.

Immunoglobulins are composed of two identical heavy chains and two identical light chains; disulfide-linked.

It localises to the secreted. It is found in the cell membrane. In terms of biological role, v region of the variable domain of immunoglobulin light chains that participates in the antigen recognition. Immunoglobulins, also known as antibodies, are membrane-bound or secreted glycoproteins produced by B lymphocytes. In the recognition phase of humoral immunity, the membrane-bound immunoglobulins serve as receptors which, upon binding of a specific antigen, trigger the clonal expansion and differentiation of B lymphocytes into immunoglobulins-secreting plasma cells. Secreted immunoglobulins mediate the effector phase of humoral immunity, which results in the elimination of bound antigens. The antigen binding site is formed by the variable domain of one heavy chain, together with that of its associated light chain. Thus, each immunoglobulin has two antigen binding sites with remarkable affinity for a particular antigen. The variable domains are assembled by a process called V-(D)-J rearrangement and can then be subjected to somatic hypermutations which, after exposure to antigen and selection, allow affinity maturation for a particular antigen. The polypeptide is Immunoglobulin kappa variable 2-24 (Homo sapiens (Human)).